Here is a 316-residue protein sequence, read N- to C-terminus: Adenine deaminase (316 aa).

3 residues coordinate Zn(2+): His14, His16, and His194. Glu197 acts as the Proton donor in catalysis. Residue Asp275 coordinates Zn(2+). Residue Asp276 participates in substrate binding.

This sequence belongs to the metallo-dependent hydrolases superfamily. Adenosine and AMP deaminases family. Adenine deaminase type 2 subfamily. Zn(2+) is required as a cofactor.

It catalyses the reaction adenine + H2O + H(+) = hypoxanthine + NH4(+). Functionally, catalyzes the hydrolytic deamination of adenine to hypoxanthine. Plays an important role in the purine salvage pathway and in nitrogen catabolism. The protein is Adenine deaminase of Pseudomonas paraeruginosa (strain DSM 24068 / PA7) (Pseudomonas aeruginosa (strain PA7)).